A 774-amino-acid chain; its full sequence is Transforming acidic coiled-coil-containing protein 1 (774 aa).

The residue at position 2 (Ala-2) is an N-acetylalanine. An interaction with LSM7 and SNRPG region spans residues 2–56 (AFSPWQILSPVQWAKWTWSAVRGSGAGEDEAGGPEGDPEEEEDSQAETKSLSFSS). Phosphoserine is present on residues Ser-4, Ser-10, and Ser-45. Residues 21 to 142 (AVRGSGAGED…VKDVRGKAEH (122 aa)) are disordered. Positions 28 to 46 (GEDEAGGPEGDPEEEEDSQ) are enriched in acidic residues. Over residues 48-61 (ETKSLSFSSDSEGN) the composition is skewed to polar residues. Residues 88-99 (PEAKPQESREAD) show a composition bias toward basic and acidic residues. The segment covering 113–128 (DTCSRSSENEAPQATV) has biased composition (polar residues). Basic and acidic residues predominate over residues 131 to 142 (HPVKDVRGKAEH). Phosphoserine occurs at positions 148 and 154. Positions 153-255 (FSIETRNCTD…PEMLMEGSPL (103 aa)) are interaction with TDRD7. Residues 207–424 (EAFTEASLKT…NNINTDDSGD (218 aa)) form an interaction with YEATS4 region. Positions 214-428 (LKTGGPCPEP…TDDSGDPCKP (215 aa)) are disordered. 2 consecutive SPAZ domains span residues 216 to 294 (TGGP…TAGV) and 354 to 504 (SKPV…TDEE). Ser-228 carries the phosphoserine; by AURKC modification. Basic residues predominate over residues 228 to 241 (SKLRKPKPVSLRKK). Residues Ser-376 and Ser-401 each carry the phosphoserine modification. Over residues 397–407 (ILQNSPPLSSK) the composition is skewed to polar residues. A Bipartite nuclear localization signal motif is present at residues 452 to 468 (PKKAKSRLITSGCKVKK). 2 positions are modified to phosphoserine: Ser-480 and Ser-560. A coiled-coil region spans residues 579–774 (IREEIITKEI…ELIAKLGKTD (196 aa)). The tract at residues 670-774 (VLEGFKKNEE…ELIAKLGKTD (105 aa)) is interaction with CH-TOG.

This sequence belongs to the TACC family. In terms of assembly, interacts with CH-TOG and YEATS4. Interacts with the AURKA and AURKB and AURKC. Interacts with LSM7, TDRD7 and SNRPG. Interacts with GCN5L2 and PCAF. Interacts with the thyroid hormone receptors THRB and THRA, predominantly with isoform alpha-2. The interaction with THRA isoform alpha-1 and THRB is decreased in the presence of thyroid hormone T3. Interacts with RARA in the nucleus. Also interacts with other nuclear receptors, including ESR1, NR3C1, PPARG and RXRA, preferentially in the absence of their hormonal ligands.

It is found in the cytoplasm. The protein localises to the nucleus. Its subcellular location is the cytoskeleton. It localises to the microtubule organizing center. The protein resides in the centrosome. It is found in the midbody. Involved in transcription regulation induced by nuclear receptors, including in T3 thyroid hormone and all-trans retinoic acid pathways. Might promote the nuclear localization of the receptors. Likely involved in the processes that promote cell division prior to the formation of differentiated tissues. The protein is Transforming acidic coiled-coil-containing protein 1 (Tacc1) of Mus musculus (Mouse).